A 397-amino-acid polypeptide reads, in one-letter code: Phosphoglycerate kinase (397 aa).

Substrate-binding positions include 25–27, arginine 41, 64–67, arginine 118, and arginine 151; these read DLN and HLGR. ATP contacts are provided by residues lysine 202, glutamate 324, and 350-353; that span reads GGDT.

The protein belongs to the phosphoglycerate kinase family. Monomer.

The protein localises to the cytoplasm. The enzyme catalyses (2R)-3-phosphoglycerate + ATP = (2R)-3-phospho-glyceroyl phosphate + ADP. It participates in carbohydrate degradation; glycolysis; pyruvate from D-glyceraldehyde 3-phosphate: step 2/5. The polypeptide is Phosphoglycerate kinase (Acidovorax ebreus (strain TPSY) (Diaphorobacter sp. (strain TPSY))).